Here is a 721-residue protein sequence, read N- to C-terminus: MSENKCPMHHSAGGTTNRDWWPKQLRLDILHQHSSLSNPMGDDFNYAEAFKSLDLAAVKQDLLALMTDSQDWWPADFGHYGPLFIRMAWHSAGTYRTGDGRGGAGSGNQRFAPLNSWPDNVSLDKARRLIWPIKQKYGNKISWADLIILTGNVALESMGFKTLGFAGGRVDIWEPEADIYWGAEDKWLDDKRYSGERDLEDPLAAVQMGLIYVNPEGPNGDPDPFAAAVDIRETFARMAMNDEETVALIAGGHTFGKTHGAGDAALVGPEPEAASIEQQGLGWKSSYKSGKGGDAISSGLEVTWTSTPTQWSNNFFENLFGYEWELTKSPAGAHQWIPKNGAGKGVIPDAHDASKRHVPAMLTTDLALIFDPDYEKISRRLFENPDEFAEIFAKAWYKLTHRDMGPCTRYLGPEVPAEEFLWQDPIPAVDHPLVDEQDVTDLKLKIIGSGLTISEVVSTAWASASTYRGSDMRGGANGARIRLAPQKDWPVNQPEQLAKVLKVLESIQSEFNKSGKKISLADLIVLAGCVGIDQAARNAGVEVTIPFTPGRMDATQAQTDVESFAVLEPVADGFRNYHPTQFSVSAEELLVDRAQLLTLTAPEMTVLIGGLRVLDTNADQSKTGVLTARPEFLTNDFFVNLLDMGTTWKPTSKAEDRFEGVDRVSGQPKWTASRVDLIFGSNSQLRALAEVYASSDAQLRFIDDFIAAWTKVMNLDRFDLR.

The tryptophyl-tyrosyl-methioninium (Trp-Tyr) (with M-238) cross-link spans 89 to 212 (WHSAGTYRTG…LAAVQMGLIY (124 aa)). The Proton acceptor role is filled by His90. The tryptophyl-tyrosyl-methioninium (Tyr-Met) (with W-89) cross-link spans 212–238 (YVNPEGPNGDPDPFAAAVDIRETFARM). Heme b is bound at residue His253.

The protein belongs to the peroxidase family. Peroxidase/catalase subfamily. In terms of assembly, homodimer or homotetramer. The cofactor is heme b. Formation of the three residue Trp-Tyr-Met cross-link is important for the catalase, but not the peroxidase activity of the enzyme.

It carries out the reaction H2O2 + AH2 = A + 2 H2O. The enzyme catalyses 2 H2O2 = O2 + 2 H2O. Its function is as follows. Bifunctional enzyme with both catalase and broad-spectrum peroxidase activity. The polypeptide is Catalase-peroxidase (Shewanella baltica (strain OS155 / ATCC BAA-1091)).